The primary structure comprises 374 residues: Copper-containing nitrite reductase (374 aa).

The tat-type signal signal peptide spans 1–31 (MFTRRAALVGAAALASAPLVIRTAGAEEAPA). Plastocyanin-like domains follow at residues 93 to 189 (MTFD…IMVL) and 254 to 355 (GAVG…VLVE). 7 residues coordinate Cu cation: His126, His131, His166, Cys167, His177, Met182, and His338.

It belongs to the multicopper oxidase family. Homotrimer. Requires Cu(2+) as cofactor. Cu(+) is required as a cofactor. FAD serves as cofactor. In terms of processing, predicted to be exported by the Tat system. The position of the signal peptide cleavage has not been experimentally proven.

It is found in the periplasm. It catalyses the reaction nitric oxide + Fe(III)-[cytochrome c] + H2O = Fe(II)-[cytochrome c] + nitrite + 2 H(+). Its pathway is nitrogen metabolism; nitrate reduction (denitrification); dinitrogen from nitrate: step 2/4. This chain is Copper-containing nitrite reductase (nirK), found in Cereibacter sphaeroides (strain ATCC 17025 / ATH 2.4.3) (Rhodobacter sphaeroides).